We begin with the raw amino-acid sequence, 312 residues long: Holliday junction branch migration complex subunit RuvB (312 aa).

The large ATPase domain (RuvB-L) stretch occupies residues 1–168 (MKTNYEFRPQ…FGHIFHLNEY (168 aa)). ATP is bound by residues Arg8, Gly49, Lys52, Thr53, Thr54, 115–117 (EDF), Arg158, Tyr168, and Arg206. Position 53 (Thr53) interacts with Mg(2+). The segment at 169–234 (EPSEISAIIL…DIKNIFKKIQ (66 aa)) is small ATPAse domain (RuvB-S). Positions 237 to 312 (EFGLDEQDIN…DFLKNNQLIK (76 aa)) are head domain (RuvB-H). Lys290 and Arg295 together coordinate DNA.

It belongs to the RuvB family. Homohexamer. Forms an RuvA(8)-RuvB(12)-Holliday junction (HJ) complex. HJ DNA is sandwiched between 2 RuvA tetramers; dsDNA enters through RuvA and exits via RuvB. An RuvB hexamer assembles on each DNA strand where it exits the tetramer. Each RuvB hexamer is contacted by two RuvA subunits (via domain III) on 2 adjacent RuvB subunits; this complex drives branch migration. In the full resolvosome a probable DNA-RuvA(4)-RuvB(12)-RuvC(2) complex forms which resolves the HJ.

The protein localises to the cytoplasm. It catalyses the reaction ATP + H2O = ADP + phosphate + H(+). Functionally, the RuvA-RuvB-RuvC complex processes Holliday junction (HJ) DNA during genetic recombination and DNA repair, while the RuvA-RuvB complex plays an important role in the rescue of blocked DNA replication forks via replication fork reversal (RFR). RuvA specifically binds to HJ cruciform DNA, conferring on it an open structure. The RuvB hexamer acts as an ATP-dependent pump, pulling dsDNA into and through the RuvAB complex. RuvB forms 2 homohexamers on either side of HJ DNA bound by 1 or 2 RuvA tetramers; 4 subunits per hexamer contact DNA at a time. Coordinated motions by a converter formed by DNA-disengaged RuvB subunits stimulates ATP hydrolysis and nucleotide exchange. Immobilization of the converter enables RuvB to convert the ATP-contained energy into a lever motion, pulling 2 nucleotides of DNA out of the RuvA tetramer per ATP hydrolyzed, thus driving DNA branch migration. The RuvB motors rotate together with the DNA substrate, which together with the progressing nucleotide cycle form the mechanistic basis for DNA recombination by continuous HJ branch migration. Branch migration allows RuvC to scan DNA until it finds its consensus sequence, where it cleaves and resolves cruciform DNA. The polypeptide is Holliday junction branch migration complex subunit RuvB (Ureaplasma parvum serovar 3 (strain ATCC 27815 / 27 / NCTC 11736)).